A 764-amino-acid chain; its full sequence is Semaphorin-3D (764 aa).

A signal peptide spans 1–41 (MKTAGEPDRRRQRRQVRTGRFSCAWWSTSVMLFFSLPEGNC). A Sema domain is found at 48–535 (RVKLGYKDLI…GSDGLVQVSL (488 aa)). The cysteines at positions 121 and 132 are disulfide-linked. Asn143 carries an N-linked (GlcNAc...) asparagine glycan. 3 disulfides stabilise this stretch: Cys150-Cys159, Cys290-Cys402, and Cys314-Cys362. Residue Asn490 is glycosylated (N-linked (GlcNAc...) asparagine). A disulfide bridge links Cys538 with Cys556. The N-linked (GlcNAc...) asparagine glycan is linked to Asn610. Positions 661–740 (GDAGSYFCTS…EYCETMWHRE (80 aa)) constitute an Ig-like C2-type domain. Cys668 and Cys733 are oxidised to a cystine. Residues 743 to 764 (QKQKGKWKHVQELRKSRNRRHH) are disordered.

The protein belongs to the semaphorin family.

It localises to the secreted. Functionally, may play a role in the guidance of several axon pathways. This chain is Semaphorin-3D (sema3d), found in Danio rerio (Zebrafish).